The following is a 312-amino-acid chain: Ornithine carbamoyltransferase, catabolic (312 aa).

Carbamoyl phosphate contacts are provided by residues 57-60 (STRT), Q84, R108, and 135-138 (HPTQ). Residues N167, D231, and 235-236 (SM) contribute to the L-ornithine site. Residue 272-273 (CL) participates in carbamoyl phosphate binding.

Belongs to the aspartate/ornithine carbamoyltransferase superfamily. OTCase family.

The protein localises to the cytoplasm. The enzyme catalyses carbamoyl phosphate + L-ornithine = L-citrulline + phosphate + H(+). It functions in the pathway amino-acid degradation; L-arginine degradation via ADI pathway; carbamoyl phosphate from L-arginine: step 2/2. In terms of biological role, reversibly catalyzes the transfer of the carbamoyl group from carbamoyl phosphate (CP) to the N(epsilon) atom of ornithine (ORN) to produce L-citrulline. The protein is Ornithine carbamoyltransferase, catabolic (arcB) of Mycoplasma capricolum subsp. capripneumoniae.